A 231-amino-acid chain; its full sequence is Probable septum site-determining protein MinC (231 aa).

The tract at residues 102-125 (KEKAPRPAPAPQAPTQNTTPVTKT) is disordered. The span at 114–123 (APTQNTTPVT) shows a compositional bias: low complexity.

It belongs to the MinC family. Interacts with MinD and FtsZ.

Cell division inhibitor that blocks the formation of polar Z ring septums. Rapidly oscillates between the poles of the cell to destabilize FtsZ filaments that have formed before they mature into polar Z rings. Prevents FtsZ polymerization. This chain is Probable septum site-determining protein MinC, found in Escherichia coli O45:K1 (strain S88 / ExPEC).